A 210-amino-acid chain; its full sequence is uncharacterized protein (210 aa).

Disordered stretches follow at residues 1–21 (MHRL…TDAI) and 168–210 (EALQ…STAQ). The stretch at 21 to 175 (IDSLDKRSDS…ELEALQQESS (155 aa)) forms a coiled coil. The span at 174–184 (SSWLGDQSTAE) shows a compositional bias: polar residues.

This sequence belongs to the SNF7 family.

This is an uncharacterized protein from Schizosaccharomyces pombe (strain 972 / ATCC 24843) (Fission yeast).